A 634-amino-acid chain; its full sequence is Putative peptidoglycan O-acetyltransferase YrhL (634 aa).

11 helical membrane passes run 10–30 (YIPG…TYHL), 38–58 (GFIG…SILL), 79–99 (RLLP…VLFD), 110–130 (AISS…LSYF), 145–165 (LAIE…GMYI), 172–192 (LAAV…VLYE), 244–264 (FLAF…EPFL), 270–290 (LFIS…SSFL), 307–327 (YGIY…QEIG), 329–349 (PVFW…ELSY), and 385–405 (MSIG…SGLA). The segment at 413–481 (KWTYSSQETN…SQQLKKPADT (69 aa)) is disordered. Positions 414–429 (WTYSSQETNADTSQAS) are enriched in polar residues. 2 stretches are compositionally biased toward basic and acidic residues: residues 430–447 (GDKK…EQKT) and 455–470 (KENK…KKDT).

This sequence belongs to the acyltransferase 3 family.

The protein localises to the cell membrane. This is Putative peptidoglycan O-acetyltransferase YrhL (yrhL) from Bacillus subtilis (strain 168).